A 100-amino-acid chain; its full sequence is Transcription elongation factor A protein-like 7 (100 aa).

The span at 1–32 (MQKPCKENEGKPKCSVPKREEKRPYGEFERQQ) shows a compositional bias: basic and acidic residues. Residues 1–34 (MQKPCKENEGKPKCSVPKREEKRPYGEFERQQTE) form a disordered region. Residues 60-88 (EEMTREGDEMERCLEEIRGLRKKFRALHS) are a coiled coil.

This sequence belongs to the TFS-II family. TFA subfamily. As to expression, highly expressed in normal and fetal brain tissues, and weakly expressed in uterus and ovary. Down-regulated in epithelial ovarian, cervical, prostate, breast, brain and lung cancer cell lines and in brain and ovarian tumors.

Its subcellular location is the nucleus. In terms of biological role, plays a role in the negative regulation of NF-kappa-B signaling at the basal level by modulating transcriptional activity of NF-kappa-B on its target gene promoters. Associates with cyclin D1 promoter containing Myc E-box sequence and transcriptionally represses cyclin D1 expression. Regulates telomerase reverse transcriptase expression and telomerase activity in both ALT (alternative lengthening of telomeres)and telomerase-positive cell lines. This chain is Transcription elongation factor A protein-like 7 (TCEAL7), found in Homo sapiens (Human).